Here is a 170-residue protein sequence, read N- to C-terminus: Cytochrome P450 monooxygenase oryQ (170 aa).

Cys85 is a binding site for heme.

It belongs to the cytochrome P450 family. Requires heme as cofactor.

It functions in the pathway secondary metabolite biosynthesis. Its function is as follows. Cytochrome P450 monooxygenase; part of the gene cluster that mediates the biosynthesis of oryzines, natural products with an unusual maleidride backbone. The two subunits of the fungal fatty acid synthase oryfasA and oryfasB probably form octenoic acid. This fatty acid is most likely activated by the acyl-CoA ligase oryP to give octenyl-CoA before the citrate synthase-like protein oryE catalyzes condensation with oxaloacetate to form tricarboxylic acid. The next steps of the pathways are conjectural, but a favorite possible route has been proposed, beginning with decarboxylation and concomitant dehydration by the decarboxylase oryM, followed by tautomerization, which may lead to the production of a diene intermediate. Reduction of this diene intermediate could give the known metabolite piliformic acid. On the pathway to oryzine B and oryzine A, however, hydroxylation of the diene by the alpha-ketoglutarate-dependent dioxygenase oryG and lactonisation by the lactonohydrolases oryH or oryL could give oryzine B directly. Finally, enoyl reduction by the dehydrogenase oryD would then convert oryzine B into oryzine A. The polypeptide is Cytochrome P450 monooxygenase oryQ (Aspergillus oryzae (strain ATCC 42149 / RIB 40) (Yellow koji mold)).